We begin with the raw amino-acid sequence, 230 residues long: Ribonuclease 3 (230 aa).

The 123-residue stretch at 5–127 (HEHLARKLGI…ILGAVLRDQG (123 aa)) folds into the RNase III domain. Glu40 contributes to the Mg(2+) binding site. Residue Asp44 is part of the active site. 2 residues coordinate Mg(2+): Asp113 and Glu116. The active site involves Glu116. One can recognise a DRBM domain in the interval 154–224 (DPKTRLQELM…AENMLSRLSD (71 aa)). A disordered region spans residues 202–230 (GEGSSRKKAEQQAAENMLSRLSDQSRFRV).

The protein belongs to the ribonuclease III family. Homodimer. It depends on Mg(2+) as a cofactor.

The protein localises to the cytoplasm. It catalyses the reaction Endonucleolytic cleavage to 5'-phosphomonoester.. Digests double-stranded RNA. Involved in the processing of primary rRNA transcript to yield the immediate precursors to the large and small rRNAs (23S and 16S). Processes some mRNAs, and tRNAs when they are encoded in the rRNA operon. Processes pre-crRNA and tracrRNA of type II CRISPR loci if present in the organism. This is Ribonuclease 3 from Methylococcus capsulatus (strain ATCC 33009 / NCIMB 11132 / Bath).